Here is a 372-residue protein sequence, read N- to C-terminus: MLDIFRGLKNLVKVSHVKTDSIVFRLHYSITVMILMSFSLIITTRQYVGNPIDCVHTKDIPEDVLNTYCWIQSTYTLKSLFLKKQGVSVPYPGIGNSDGDPADKKHYKYYQWVCFCLFFQAILFYTPRWLWKSWEGGKIHALIMDLDIGICSEAEKKQKKKLLLDYLWENLRYHNWWAYRYYVCELLALINVIGQMFLMNRFFDGEFITFGLKVIDYMETDQEDRMDPMIYIFPRMTKCTFFKYGSSGEVEKHDAICILPLNVVNEKIYIFLWFWFILLTFLTLLTLIYRVVIIFSPRMRVYLFRMRFRLVRRDAIEIIVRRSKMGDWFLLYLLGENIDTVIFRDVVQDLANRLGHNQHHRVPGLKGEIQDA.

Residues 1 to 21 (MLDIFRGLKNLVKVSHVKTDS) are Cytoplasmic-facing. The helical transmembrane segment at 22–42 (IVFRLHYSITVMILMSFSLII) threads the bilayer. Residues 43–110 (TTRQYVGNPI…PADKKHYKYY (68 aa)) lie on the Extracellular side of the membrane. A helical transmembrane segment spans residues 111–131 (QWVCFCLFFQAILFYTPRWLW). Over 132–182 (KSWEGGKIHALIMDLDIGICSEAEKKQKKKLLLDYLWENLRYHNWWAYRYY) the chain is Cytoplasmic. Residues 183–203 (VCELLALINVIGQMFLMNRFF) form a helical membrane-spanning segment. Residues 204-267 (DGEFITFGLK…ILPLNVVNEK (64 aa)) lie on the Extracellular side of the membrane. A helical membrane pass occupies residues 268 to 288 (IYIFLWFWFILLTFLTLLTLI). Residues 289-372 (YRVVIIFSPR…PGLKGEIQDA (84 aa)) are Cytoplasmic-facing.

This sequence belongs to the pannexin family. In terms of assembly, monomer (isoform Lethal). In terms of tissue distribution, isoform Neural is expressed in synapses of giant fibers (GF), in a large thoracic cell in location of postsynaptic target and optic lobe lamina and medulla. Isoform Lethal is expressed in embryonic mesodermal derivatives. During metamorphosis, both isoforms are dynamically expressed in pupal nervous system.

The protein resides in the cell membrane. It is found in the cell junction. Its subcellular location is the gap junction. Structural component of the gap junctions at electrical synapses in distal and mid-depth levels in the lamina. Isoform Lethal forms voltage sensitive intercellular channels through homotypic interactions. In Drosophila melanogaster (Fruit fly), this protein is Innexin shaking-B (shakB).